The sequence spans 3603 residues: Plipastatin synthase subunit D (3603 aa).

Residues 7–306 (IQDIYPLSYM…NTMPVRVQGA (300 aa)) form a condensation 1 region. Residues 7-1043 (IQDIYPLSYM…ALIIREAEQN (1037 aa)) are domain 1 (proline-activating). The interval 490 to 889 (TYRELNKAAN…NHPDISEAAI (400 aa)) is adenylation 1. The 76-residue stretch at 966 to 1041 (APRNLLEAKL…GLALIIREAE (76 aa)) folds into the Carrier 1 domain. Position 1001 is an O-(pantetheine 4'-phosphoryl)serine (Ser1001). The tract at residues 1053-1334 (KRDTYPVSSA…NTLALRTRPA (282 aa)) is condensation 2. The domain 2 (glutamine-activating) stretch occupies residues 1053–2069 (KRDTYPVSSA…TVEGLATVIR (1017 aa)). The adenylation 2 stretch occupies residues 1521–1924 (TYKELNEQAN…SIEGVREAAV (404 aa)). The Carrier 2 domain maps to 1997–2072 (APRNVTEMKL…GLATVIREGT (76 aa)). Position 2032 is an O-(pantetheine 4'-phosphoryl)serine (Ser2032). Residues 2084–2374 (KQETYPVSSA…NTLALRTRPE (291 aa)) are condensation 3. Positions 2084–3596 (KQETYPVSSA…ELTEDALQEI (1513 aa)) are domain 3 (proline-activating). Positions 2560 to 2956 (TYQELDEWSN…CIKGVKDAAV (397 aa)) are adenylation 3. The Carrier 3 domain maps to 3034–3108 (PPSSKMEQIL…ELAAYIRDSD (75 aa)). The residue at position 3069 (Ser3069) is an O-(pantetheine 4'-phosphoryl)serine. The interval 3116–3596 (VEGDVQWSPV…ELTEDALQEI (481 aa)) is epimerization.

The protein belongs to the ATP-dependent AMP-binding enzyme family. The cofactor is pantetheine 4'-phosphate.

Its function is as follows. This protein is a multifunctional enzyme, able to activate and polymerize the amino acids Pro, Gln and Tyr as part of the biosynthesis of the lipopeptide antibiotic plipastatin. The Tyr residue is further epimerized to the D-isomer form. The activation sites for these amino acids consist of individual domains. The polypeptide is Plipastatin synthase subunit D (ppsD) (Bacillus subtilis (strain 168)).